A 364-amino-acid polypeptide reads, in one-letter code: DNA replication and repair protein RecF (364 aa).

30–37 (GENGSGKT) is an ATP binding site.

Belongs to the RecF family.

It is found in the cytoplasm. The RecF protein is involved in DNA metabolism; it is required for DNA replication and normal SOS inducibility. RecF binds preferentially to single-stranded, linear DNA. It also seems to bind ATP. This Pseudoalteromonas translucida (strain TAC 125) protein is DNA replication and repair protein RecF.